The sequence spans 307 residues: Elongation factor Ts (307 aa).

The interval 80-83 (TDFV) is involved in Mg(2+) ion dislocation from EF-Tu.

This sequence belongs to the EF-Ts family.

It is found in the cytoplasm. Functionally, associates with the EF-Tu.GDP complex and induces the exchange of GDP to GTP. It remains bound to the aminoacyl-tRNA.EF-Tu.GTP complex up to the GTP hydrolysis stage on the ribosome. The protein is Elongation factor Ts of Albidiferax ferrireducens (strain ATCC BAA-621 / DSM 15236 / T118) (Rhodoferax ferrireducens).